Reading from the N-terminus, the 182-residue chain is Endoribonuclease YbeY (182 aa).

Residues histidine 115, histidine 119, and histidine 125 each contribute to the Zn(2+) site.

This sequence belongs to the endoribonuclease YbeY family. Zn(2+) serves as cofactor.

The protein localises to the cytoplasm. In terms of biological role, single strand-specific metallo-endoribonuclease involved in late-stage 70S ribosome quality control and in maturation of the 3' terminus of the 16S rRNA. In Bifidobacterium longum subsp. infantis (strain ATCC 15697 / DSM 20088 / JCM 1222 / NCTC 11817 / S12), this protein is Endoribonuclease YbeY.